We begin with the raw amino-acid sequence, 124 residues long: Peptidyl-tRNA hydrolase (124 aa).

The protein belongs to the PTH2 family.

The protein localises to the cytoplasm. The catalysed reaction is an N-acyl-L-alpha-aminoacyl-tRNA + H2O = an N-acyl-L-amino acid + a tRNA + H(+). In terms of biological role, the natural substrate for this enzyme may be peptidyl-tRNAs which drop off the ribosome during protein synthesis. In Aeropyrum pernix (strain ATCC 700893 / DSM 11879 / JCM 9820 / NBRC 100138 / K1), this protein is Peptidyl-tRNA hydrolase.